Reading from the N-terminus, the 752-residue chain is ATP-dependent RNA helicase DRS1 (752 aa).

2 disordered regions span residues Met-1–Glu-61 and Gly-119–Asp-223. Residues Asp-19–Lys-34 are compositionally biased toward acidic residues. Residues Thr-40–Lys-51 are compositionally biased toward basic residues. Residues Ala-124 to Glu-142 are compositionally biased toward basic and acidic residues. 2 stretches are compositionally biased toward acidic residues: residues Asn-167 to Met-191 and Asp-200 to Glu-209. Position 208 is a phosphoserine (Ser-208). Residues Glu-231–Ser-259 carry the Q motif motif. Positions Ile-262 to Ile-437 constitute a Helicase ATP-binding domain. Ala-275–Thr-282 is a binding site for ATP. The short motif at Asp-385–Asp-388 is the DEAD box element. The Helicase C-terminal domain maps to Lys-448 to Leu-639. The stretch at Ile-621 to Glu-667 forms a coiled coil. Positions Arg-673–Arg-752 are disordered. Positions Arg-694–Lys-705 are enriched in basic residues. A compositionally biased stretch (basic and acidic residues) spans Thr-722–Phe-734. Residues Lys-735–Arg-752 show a composition bias toward basic residues.

It belongs to the DEAD box helicase family. DDX27/DRS1 subfamily. As to quaternary structure, interacts with RRP1 and associates with pre-ribosomal particles.

The protein localises to the nucleus. The protein resides in the nucleolus. The enzyme catalyses ATP + H2O = ADP + phosphate + H(+). Its function is as follows. ATP-binding RNA helicase involved in ribosome assembly. This Saccharomyces cerevisiae (strain ATCC 204508 / S288c) (Baker's yeast) protein is ATP-dependent RNA helicase DRS1 (DRS1).